A 330-amino-acid chain; its full sequence is MKIVVLGAGAWGTALAISAAAHAACHEVQLWARDAQQAQAMQAKRQNQRYLPGLAFPPGLHVASGDMAALAADADLVVVGTPMAALRGMLERLDGCAAPIAWLCKGFEAGTGLMAHEVCAQVAPRLHSGVFSGPSFAQEVATAQPTAMVAASPRATVRDALVQAFHGPALRVYASEDIVGVEVGGAVKNVLAIATGLCDGLQLGMNARAALITRGLAEMTRLGLALGARPETFMGLSGLGDLVLTATGDLSRNRRVGLLLAEGRTLAQAVESLGHVAEGVYSARTVVQRARAVGVEMPIAECVVALLDGELRAAETVARLMEREPTVERH.

The NADPH site is built by tryptophan 11, arginine 33, and lysine 105. Sn-glycerol 3-phosphate is bound by residues lysine 105, glycine 133, and serine 135. An NADPH-binding site is contributed by alanine 137. 5 residues coordinate sn-glycerol 3-phosphate: lysine 188, aspartate 241, serine 251, arginine 252, and asparagine 253. The active-site Proton acceptor is the lysine 188. Arginine 252 is a binding site for NADPH. NADPH contacts are provided by valine 276 and glutamate 278.

The protein belongs to the NAD-dependent glycerol-3-phosphate dehydrogenase family.

The protein resides in the cytoplasm. The catalysed reaction is sn-glycerol 3-phosphate + NAD(+) = dihydroxyacetone phosphate + NADH + H(+). The enzyme catalyses sn-glycerol 3-phosphate + NADP(+) = dihydroxyacetone phosphate + NADPH + H(+). Its pathway is membrane lipid metabolism; glycerophospholipid metabolism. In terms of biological role, catalyzes the reduction of the glycolytic intermediate dihydroxyacetone phosphate (DHAP) to sn-glycerol 3-phosphate (G3P), the key precursor for phospholipid synthesis. In Acidovorax ebreus (strain TPSY) (Diaphorobacter sp. (strain TPSY)), this protein is Glycerol-3-phosphate dehydrogenase [NAD(P)+].